The primary structure comprises 201 residues: Thymidylate kinase (201 aa).

7 to 14 lines the ATP pocket; sequence GIDGSGKS.

It belongs to the thymidylate kinase family.

It catalyses the reaction dTMP + ATP = dTDP + ADP. Functionally, phosphorylation of dTMP to form dTDP in both de novo and salvage pathways of dTTP synthesis. This is Thymidylate kinase from Thermosipho africanus (strain TCF52B).